The chain runs to 341 residues: HTH-type transcriptional repressor PurR (341 aa).

In terms of domain architecture, HTH lacI-type spans 2-56; sequence ATIKDVAKRAGVSTTTVSHVINKTRFVAEETKAAVRAAIKELHYSPSAVARSLKV. The H-T-H motif DNA-binding region spans 4–23; sequence IKDVAKRAGVSTTTVSHVIN. Residues 48–56 mediate DNA binding; the sequence is SAVARSLKV. Positions 73, 190, 192, 221, and 275 each coordinate hypoxanthine.

Homodimer.

It functions in the pathway purine metabolism; purine nucleotide biosynthesis [regulation]. Its function is as follows. Is the main repressor of the genes involved in the de novo synthesis of purine nucleotides, regulating purB, purC, purEK, purF, purHD, purL, purMN and guaBA expression. PurR is allosterically activated to bind its cognate DNA by binding the purine corepressors, hypoxanthine or guanine, thereby effecting transcription repression. In Pectobacterium atrosepticum (strain SCRI 1043 / ATCC BAA-672) (Erwinia carotovora subsp. atroseptica), this protein is HTH-type transcriptional repressor PurR.